Here is a 264-residue protein sequence, read N- to C-terminus: Alkaline ceramidase 1 (264 aa).

The Lumenal portion of the chain corresponds to 1-27; the sequence is MPSIFAYQSSEVDWCESNFQYSELVAE. 5 residues coordinate Ca(2+): Asp13, Trp14, Glu16, Asn18, and Glu27. Residues 28-48 form a helical membrane-spanning segment; that stretch reads FYNTFSNIPFFIFGPLMMLLM. The Cytoplasmic segment spans residues 49–57; that stretch reads HPYAQKRSR. The chain crosses the membrane as a helical span at residues 58–78; that stretch reads YIYVVWVLFMIIGLFSMYFHM. His77 provides a ligand contact to Zn(2+). At 79-81 the chain is on the lumenal side; that stretch reads TLS. The helical transmembrane segment at 82–102 threads the bilayer; it reads FLGQLLDEIAILWLLGSGYSI. Residues 103–119 are Cytoplasmic-facing; that stretch reads WMPRCYFPSFLGGNRSQ. A helical membrane pass occupies residues 120–137; the sequence is FIRLVFITTVVSTLLSFL. Residue Arg138 is a topological domain, lumenal. A helical transmembrane segment spans residues 139–159; the sequence is PTVNAYALNSIALHILYIVCQ. Residues 160–176 lie on the Cytoplasmic side of the membrane; that stretch reads EYRKTSNKELRHLIEVS. The helical transmembrane segment at 177 to 197 threads the bilayer; it reads VVLWAVALTSWISDRLLCSFW. Topologically, residues 198–206 are lumenal; that stretch reads QRIHFFYLH. Zn(2+) contacts are provided by His206 and His210. A helical membrane pass occupies residues 207–227; sequence SIWHVLISITFPYGMVTMALV. The Cytoplasmic portion of the chain corresponds to 228-264; that stretch reads DANYEMPGETLKVRYWPRDSWPVGLPYVEIRGDDKDC.

This sequence belongs to the alkaline ceramidase family. The cofactor is Zn(2+). In terms of tissue distribution, mainly expressed in epidermis.

Its subcellular location is the endoplasmic reticulum membrane. It carries out the reaction an N-acylsphing-4-enine + H2O = sphing-4-enine + a fatty acid. It catalyses the reaction N-tetracosanoyl-sphing-4-enine + H2O = tetracosanoate + sphing-4-enine. The catalysed reaction is an N-acylsphinganine + H2O = sphinganine + a fatty acid. The enzyme catalyses N-(9Z-octadecenoyl)-sphing-4-enine + H2O = sphing-4-enine + (9Z)-octadecenoate. It carries out the reaction N-(15Z-tetracosenoyl)-sphing-4-enine + H2O = (15Z)-tetracosenoate + sphing-4-enine. It participates in lipid metabolism; sphingolipid metabolism. Its activity is regulated as follows. Inhibited by sphingosine. Activity is Ca(2+)-dependent. Endoplasmic reticulum ceramidase that catalyzes the hydrolysis of ceramides into sphingosine and free fatty acids at alkaline pH. Ceramides, sphingosine, and its phosphorylated form sphingosine-1-phosphate are bioactive lipids that mediate cellular signaling pathways regulating several biological processes including cell proliferation, apoptosis and differentiation. Exhibits a strong substrate specificity towards the natural stereoisomer of ceramides with D-erythro-sphingosine as a backbone and has a higher activity towards very long-chain unsaturated fatty acids like the C24:1-ceramide. May also hydrolyze dihydroceramides to produce dihydrosphingosine. ACER1 is a skin-specific ceramidase that regulates the levels of ceramides, sphingosine and sphingosine-1-phosphate in the epidermis, mediates the calcium-induced differentiation of epidermal keratinocytes and more generally plays an important role in skin homeostasis. The protein is Alkaline ceramidase 1 of Homo sapiens (Human).